The primary structure comprises 248 residues: Probable uridine-cytidine kinase (248 aa).

15–23 (GGTSCGKST) is a binding site for ATP. Asp-73, Tyr-101, Arg-154, Arg-164, and Gln-172 together coordinate substrate. Position 201 (Asp-201) interacts with ATP. Residues 224 to 248 (SDEEEEKENELVKQGSFRRPFSRPH) are disordered.

Belongs to the uridine kinase family.

It carries out the reaction uridine + ATP = UMP + ADP + H(+). The catalysed reaction is cytidine + ATP = CMP + ADP + H(+). It functions in the pathway pyrimidine metabolism; CTP biosynthesis via salvage pathway; CTP from cytidine: step 1/3. The protein operates within pyrimidine metabolism; UMP biosynthesis via salvage pathway; UMP from uridine: step 1/1. This chain is Probable uridine-cytidine kinase, found in Caenorhabditis elegans.